A 473-amino-acid chain; its full sequence is ATP synthase subunit beta (473 aa).

158-165 (GGAGVGKT) provides a ligand contact to ATP.

This sequence belongs to the ATPase alpha/beta chains family. As to quaternary structure, F-type ATPases have 2 components, CF(1) - the catalytic core - and CF(0) - the membrane proton channel. CF(1) has five subunits: alpha(3), beta(3), gamma(1), delta(1), epsilon(1). CF(0) has three main subunits: a(1), b(2) and c(9-12). The alpha and beta chains form an alternating ring which encloses part of the gamma chain. CF(1) is attached to CF(0) by a central stalk formed by the gamma and epsilon chains, while a peripheral stalk is formed by the delta and b chains. The F(1)F(0) complex interacts with SpoIIIJ and YqjG; YqgA is found in the same complex.

Its subcellular location is the cell membrane. It is found in the membrane raft. The enzyme catalyses ATP + H2O + 4 H(+)(in) = ADP + phosphate + 5 H(+)(out). Its function is as follows. Produces ATP from ADP in the presence of a proton gradient across the membrane. The catalytic sites are hosted primarily by the beta subunits. The sequence is that of ATP synthase subunit beta from Bacillus subtilis (strain 168).